A 227-amino-acid polypeptide reads, in one-letter code: Homeobox-leucine zipper protein ATHB-54 (227 aa).

The homeobox DNA-binding region spans 65–124 (EITKKRKLTPIQLRLLEESFEEEKRLEPDRKLWLAEKLGLQPSQVAVWFQNRRARYKTKQ). A leucine-zipper region spans residues 125–153 (LEHDCDSLKASYAKLKTDWDILFVQNQTL). The segment at 175 to 198 (IERKRLGEEGSSVKSDNTQYSEEE) is disordered.

The protein belongs to the HD-ZIP homeobox family. Class I subfamily. As to expression, predominantly expressed in flowers and siliques.

It localises to the nucleus. Its function is as follows. Probable transcription factor. The polypeptide is Homeobox-leucine zipper protein ATHB-54 (ATHB-54) (Arabidopsis thaliana (Mouse-ear cress)).